A 521-amino-acid chain; its full sequence is Lipid-translocating exporter-like protein RTA1 (521 aa).

7 helical membrane-spanning segments follow: residues 186-206 (GAPI…SWQC), 211-231 (AWKL…GYAL), 249-269 (LALF…LELA), 292-312 (VTAF…SGVS), 332-352 (LVAL…SVLF), 371-391 (TLMT…FRLV), and 418-438 (EAYF…LWNV). Positions 493–521 (THSQPQELYENPNGNGHKKFRLGNGGRAT) are disordered.

The protein belongs to the lipid-translocating exporter (LTE) (TC 9.A.26.1) family.

It is found in the membrane. Lipid-translocating exporter-like protein; part of the gene cluster that mediates the biosynthesis of phomenoic acid, a long chain aliphatic carboxylic acid that does not appear to be essential for pathogenicity but may play a role in allowing to outcompete other fungi in the environmental niche via its antifungal properties. The protein is Lipid-translocating exporter-like protein RTA1 of Leptosphaeria maculans (strain JN3 / isolate v23.1.3 / race Av1-4-5-6-7-8) (Blackleg fungus).